A 163-amino-acid chain; its full sequence is Gas vesicle protein H2 (163 aa).

Residues L57–D92 are disordered. Residues E78–D88 are compositionally biased toward basic and acidic residues.

This sequence belongs to the gas vesicle GvpH family. In terms of assembly, gvpF to GvpM interact with each other in vitro, and may form multi-subunit complex(es). Interacts with GvpC. Might interact with GvpA.

It is found in the gas vesicle. The protein resides in the cytoplasm. Functionally, a minor component of the gas vesicle, also found in soluble extracts. Proteins GvpF to GvpM might be involved in nucleating gas vesicle formation. Gas vesicles are hollow, gas filled proteinaceous nanostructures found in several microbial planktonic microorganisms. They allow positioning of halobacteria at the optimal depth for growth in the poorly aerated, shallow brine pools of their habitat. Its function is as follows. Expression of 2 c-vac DNA fragments containing 2 divergently transcribed regions (gvpE-gvpF-gvpG-gvpH-gvpI-gvpJ-gvpK-gvpL-gvpM and gvpA-gvpC-gvpN-gvpO) allows H.volcanii to produce gas vesicles. The chain is Gas vesicle protein H2 from Halobacterium salinarum (strain ATCC 700922 / JCM 11081 / NRC-1) (Halobacterium halobium).